The chain runs to 174 residues: uncharacterized protein (174 aa).

Residues 138-174 (VNLTSKSSGRSDEEGTTRRAPVLKTRADFVSRKDKHR) form a disordered region. Over residues 162–174 (TRADFVSRKDKHR) the composition is skewed to basic and acidic residues.

This is an uncharacterized protein from Bos taurus (Bovine).